The sequence spans 302 residues: N-acetylmuramic acid 6-phosphate etherase (302 aa).

The region spanning 57–220 is the SIS domain; sequence IADRFRSNGR…TTGAMIRIGK (164 aa). Glu85 functions as the Proton donor in the catalytic mechanism. Residue Glu116 is part of the active site.

The protein belongs to the GCKR-like family. MurNAc-6-P etherase subfamily. As to quaternary structure, homodimer.

It carries out the reaction N-acetyl-D-muramate 6-phosphate + H2O = N-acetyl-D-glucosamine 6-phosphate + (R)-lactate. Its pathway is amino-sugar metabolism; N-acetylmuramate degradation. Functionally, specifically catalyzes the cleavage of the D-lactyl ether substituent of MurNAc 6-phosphate, producing GlcNAc 6-phosphate and D-lactate. The sequence is that of N-acetylmuramic acid 6-phosphate etherase from Rhodopirellula baltica (strain DSM 10527 / NCIMB 13988 / SH1).